Here is a 142-residue protein sequence, read N- to C-terminus: Large ribosomal subunit protein uL23 (142 aa).

Belongs to the universal ribosomal protein uL23 family.

In terms of biological role, this protein binds to a specific region on the 26S rRNA. This Cyberlindnera jadinii (Torula yeast) protein is Large ribosomal subunit protein uL23 (RPL25).